The sequence spans 305 residues: Dermonecrotic toxin LiSicTox-betaID1 (305 aa).

An N-terminal signal peptide occupies residues 1–18 (MQLFIILCLAGSAVQLEG). Positions 19 to 26 (TELDGVER) are excised as a propeptide. The active site involves H38. 2 residues coordinate Mg(2+): E58 and D60. H74 (nucleophile) is an active-site residue. 2 cysteine pairs are disulfide-bonded: C78/C84 and C80/C223. D118 serves as a coordination point for Mg(2+).

Belongs to the arthropod phospholipase D family. Class II subfamily. Class IIb sub-subfamily. It depends on Mg(2+) as a cofactor. In terms of tissue distribution, expressed by the venom gland.

It is found in the secreted. It catalyses the reaction an N-(acyl)-sphingosylphosphocholine = an N-(acyl)-sphingosyl-1,3-cyclic phosphate + choline. The enzyme catalyses an N-(acyl)-sphingosylphosphoethanolamine = an N-(acyl)-sphingosyl-1,3-cyclic phosphate + ethanolamine. It carries out the reaction a 1-acyl-sn-glycero-3-phosphocholine = a 1-acyl-sn-glycero-2,3-cyclic phosphate + choline. The catalysed reaction is a 1-acyl-sn-glycero-3-phosphoethanolamine = a 1-acyl-sn-glycero-2,3-cyclic phosphate + ethanolamine. Its function is as follows. Dermonecrotic toxins cleave the phosphodiester linkage between the phosphate and headgroup of certain phospholipids (sphingolipid and lysolipid substrates), forming an alcohol (often choline) and a cyclic phosphate. This toxin acts on sphingomyelin (SM) with low activity. It may also act on ceramide phosphoethanolamine (CPE), lysophosphatidylcholine (LPC) and lysophosphatidylethanolamine (LPE), but not on lysophosphatidylserine (LPS), and lysophosphatidylglycerol (LPG). It acts by transphosphatidylation, releasing exclusively cyclic phosphate products as second products. Has no or weak activities in inducing dermonecrosis, hemolysis, inflammatory response, platelet aggregation and increase in vessel permeability. In vivo, shows no lethality when injected at higher dose into mice. The protein is Dermonecrotic toxin LiSicTox-betaID1 of Loxosceles intermedia (Brown spider).